Consider the following 64-residue polypeptide: Large ribosomal subunit protein bL35 (64 aa).

It belongs to the bacterial ribosomal protein bL35 family.

In Acinetobacter baumannii (strain AB307-0294), this protein is Large ribosomal subunit protein bL35.